A 296-amino-acid polypeptide reads, in one-letter code: MFS-type transporter pytF (296 aa).

Helical transmembrane passes span 30 to 50, 72 to 92, 98 to 118, 124 to 144, 157 to 177, 180 to 200, and 238 to 258; these read WLVV…LNSF, WIGS…GPVF, KVLF…VSLC, FILA…YPTI, LAMG…PLIL, LFAV…SFAL, and VVGM…IPLF. N265 carries an N-linked (GlcNAc...) asparagine glycan. The helical transmembrane segment at 271 to 291 threads the bilayer; sequence SLISILNAGSFVGRIVSGALA.

Belongs to the major facilitator superfamily. Monocarboxylate porter (TC 2.A.1.13) family.

The protein localises to the cell membrane. MFS-type transporter; part of the gene cluster that mediates the biosynthesis of pyranterreones, a family of antioxidative compounds. Directly involved in the secretion of pyranterreones. This Aspergillus terreus (strain NIH 2624 / FGSC A1156) protein is MFS-type transporter pytF.